Here is a 188-residue protein sequence, read N- to C-terminus: Gamma-glutamylcyclotransferase (188 aa).

19-24 provides a ligand contact to substrate; it reads YFAYGS. Glu-98 acts as the Proton acceptor in catalysis. Residue Tyr-139 coordinates substrate. Ser-173 bears the Phosphoserine mark.

Belongs to the gamma-glutamylcyclotransferase family. Homodimer.

The catalysed reaction is an alpha-(gamma-L-glutamyl)-L-amino acid = 5-oxo-L-proline + an L-alpha-amino acid. In terms of biological role, catalyzes the formation of 5-oxoproline from gamma-glutamyl dipeptides and may play a significant role in glutathione homeostasis. Induces release of cytochrome c from mitochondria with resultant induction of apoptosis. The sequence is that of Gamma-glutamylcyclotransferase from Homo sapiens (Human).